The chain runs to 109 residues: C-X-C motif chemokine 13 (109 aa).

The N-terminal stretch at 1–21 (MRLSTATLLLLLASCLSPGHG) is a signal peptide. 2 cysteine pairs are disulfide-bonded: Cys-32/Cys-59 and Cys-34/Cys-75.

Belongs to the intercrine alpha (chemokine CxC) family. Found in spleen (B-cell-rich zone or follicles), Peyer patches (strongest within germinal centers and extending to the mantle zone) and lymph nodes (in reticular pattern in follicles).

Its subcellular location is the secreted. Strongly chemotactic for B-lymphocytes, weakly for spleen monocytes and macrophages but no chemotactic activity for granulocytes. Binds to BLR1/CXCR5. May play a role in directing the migration of B-lymphocytes to follicles in secondary lymphoid organs. This chain is C-X-C motif chemokine 13 (Cxcl13), found in Mus musculus (Mouse).